Here is a 366-residue protein sequence, read N- to C-terminus: Succinyl-diaminopimelate desuccinylase (366 aa).

His-66 contributes to the Zn(2+) binding site. Residue Asp-68 is part of the active site. Asp-97 provides a ligand contact to Zn(2+). The active-site Proton acceptor is Glu-127. The Zn(2+) site is built by Glu-128, Glu-156, and His-341.

The protein belongs to the peptidase M20A family. DapE subfamily. As to quaternary structure, homodimer. Requires Zn(2+) as cofactor. It depends on Co(2+) as a cofactor.

The catalysed reaction is N-succinyl-(2S,6S)-2,6-diaminopimelate + H2O = (2S,6S)-2,6-diaminopimelate + succinate. The protein operates within amino-acid biosynthesis; L-lysine biosynthesis via DAP pathway; LL-2,6-diaminopimelate from (S)-tetrahydrodipicolinate (succinylase route): step 3/3. Catalyzes the hydrolysis of N-succinyl-L,L-diaminopimelic acid (SDAP), forming succinate and LL-2,6-diaminopimelate (DAP), an intermediate involved in the bacterial biosynthesis of lysine and meso-diaminopimelic acid, an essential component of bacterial cell walls. This Aliarcobacter butzleri (strain RM4018) (Arcobacter butzleri) protein is Succinyl-diaminopimelate desuccinylase.